The primary structure comprises 177 residues: Large ribosomal subunit protein uL6 (177 aa).

This sequence belongs to the universal ribosomal protein uL6 family. In terms of assembly, part of the 50S ribosomal subunit.

Functionally, this protein binds to the 23S rRNA, and is important in its secondary structure. It is located near the subunit interface in the base of the L7/L12 stalk, and near the tRNA binding site of the peptidyltransferase center. The sequence is that of Large ribosomal subunit protein uL6 from Ralstonia pickettii (strain 12J).